A 483-amino-acid polypeptide reads, in one-letter code: Serine protease HTRA4 (483 aa).

Positions 1–30 are cleaved as a signal peptide; the sequence is MSFQRLWAVRTQFLLLWLLLPAVPVPWAEA. The region spanning 35–113 is the IGFBP N-terminal domain; it reads VSLPCPDACD…GAWLGTCGCA (79 aa). 6 disulfide bridges follow: C39–C65, C43–C67, C48–C68, C54–C71, C79–C93, and C87–C110. The segment at 208–368 is serine protease; it reads GSGFIVSEDG…IPSDRIRQFL (161 aa). Active-site charge relay system residues include H224, D254, and S332. The region spanning 379–471 is the PDZ domain; the sequence is KAPLQKKYLG…LSIIVLRGSQ (93 aa).

Belongs to the peptidase S1C family.

It is found in the secreted. Functionally, serine protease. The protein is Serine protease HTRA4 (Htra4) of Mus musculus (Mouse).